The sequence spans 313 residues: Dehydrodolichyl diphosphate synthase CPT5, chloroplastic (313 aa).

A chloroplast-targeting transit peptide spans Met1 to Ala42. Residue Asp89 is part of the active site.

Belongs to the UPP synthase family. It depends on Mg(2+) as a cofactor. As to expression, expressed in leaf trichomes, stem trichomes and old leaves. Expressed at low levels in young leaves and flowers.

Its subcellular location is the plastid. It is found in the chloroplast. It carries out the reaction n isopentenyl diphosphate + (2E,6E)-farnesyl diphosphate = a di-trans,poly-cis-polyprenyl diphosphate + n diphosphate. In terms of biological role, catalyzes cis-prenyl chain elongation to produce the polyprenyl backbone of dolichol, a glycosyl carrier-lipid required for the biosynthesis of several classes of glycoprotein. In Solanum lycopersicum (Tomato), this protein is Dehydrodolichyl diphosphate synthase CPT5, chloroplastic.